The sequence spans 323 residues: Aldo-keto reductase family 1 member C21 (323 aa).

20-24 (GFGTA) lines the NADP(+) pocket. K31 serves as a coordination point for substrate. An NADP(+)-binding site is contributed by D50. Y55 acts as the Proton donor in catalysis. H117 provides a ligand contact to substrate. NADP(+) is bound by residues 166 to 167 (SN), Q190, 216 to 224 (YGVLGTQRY), and 270 to 280 (TSLKEERIKEN).

Belongs to the aldo/keto reductase family. In terms of assembly, monomer. Detected in kidney and brain.

It localises to the cytoplasm. It catalyses the reaction androsterone + NADP(+) = 5alpha-androstan-3,17-dione + NADPH + H(+). It carries out the reaction androsterone + NAD(+) = 5alpha-androstan-3,17-dione + NADH + H(+). Its activity is regulated as follows. Inhibited by high concentrations of substrate. Its function is as follows. NADP-dependent 17-alpha-hydroxysteroid dehydrogenase that converts 5-alpha-androstane-3,17-dione into androsterone. Has lower 3-alpha-hydroxysteroid dehydrogenase activity. Has broad substrate specificity and acts on various 17-alpha-hydroxysteroids, 17-ketosteroids, 3-alpha hydroxysteroids and 3-ketosteroids. Reduction of keto groups is strictly stereoselective. Reduction of 17-ketosteroids yields only 17-alpha-hydroxysteroids. Likewise, reduction of 3-ketosteroids yields only 3-alpha-hydroxysteroids. This Mus musculus (Mouse) protein is Aldo-keto reductase family 1 member C21 (Akr1c21).